The chain runs to 515 residues: Fatty acyl-CoA reductase 1 (515 aa).

The Cytoplasmic segment spans residues 1-465 (MVSIPEYYEG…ARKHLNKLRN (465 aa)). The interval 451 to 507 (SGLPAARKHLNKLRNIRYGFNTILVILIWRIFIARSQMARNIWYFVVSLCYKFLSYF) is necessary and sufficient for PEX19-mediated localization into peroxisome membrane. A helical membrane pass occupies residues 466-483 (IRYGFNTILVILIWRIFI). Residues 484–515 (ARSQMARNIWYFVVSLCYKFLSYFRASSTMRY) are Peroxisomal-facing.

The protein belongs to the fatty acyl-CoA reductase family. Interacts with PEX19; PEX19 mediates the targeting of FAR1 to peroxisomes. In terms of tissue distribution, widely expressed. Expressed in all tissues examined. Highest expression seen in preputial gland. Expressed in the brain where large quantities of ether lipids are synthesized.

It localises to the peroxisome membrane. The catalysed reaction is a long-chain fatty acyl-CoA + 2 NADPH + 2 H(+) = a long-chain primary fatty alcohol + 2 NADP(+) + CoA. It carries out the reaction hexadecanoyl-CoA + 2 NADPH + 2 H(+) = hexadecan-1-ol + 2 NADP(+) + CoA. It catalyses the reaction octadecanoyl-CoA + 2 NADPH + 2 H(+) = octadecan-1-ol + 2 NADP(+) + CoA. The enzyme catalyses (9Z)-octadecenoyl-CoA + 2 NADPH + 2 H(+) = (9Z)-octadecen-1-ol + 2 NADP(+) + CoA. The catalysed reaction is (9Z,12Z)-octadecadienoyl-CoA + 2 NADPH + 2 H(+) = (9Z,12Z)-octadecadien-1-ol + 2 NADP(+) + CoA. It carries out the reaction eicosanoyl-CoA + 2 NADPH + 2 H(+) = eicosan-1-ol + 2 NADP(+) + CoA. It catalyses the reaction 16-methylheptadecanoyl-CoA + 2 NADPH + 2 H(+) = 16-methylheptadecan-1-ol + 2 NADP(+) + CoA. The enzyme catalyses 18-methylnonadecanoyl-CoA + 2 NADPH + 2 H(+) = 18-methylnonadecan-1-ol + 2 NADP(+) + CoA. Its function is as follows. Catalyzes the reduction of saturated and unsaturated C16 or C18 fatty acyl-CoA to fatty alcohols. It plays an essential role in the production of ether lipids/plasmalogens which synthesis requires fatty alcohols. In parallel, it is also required for wax monoesters production since fatty alcohols also constitute a substrate for their synthesis. The sequence is that of Fatty acyl-CoA reductase 1 from Mus musculus (Mouse).